The primary structure comprises 692 residues: Elongation factor G (692 aa).

The 275-residue stretch at 8-282 (ENTRNIGIMA…AVIDYLPSPL (275 aa)) folds into the tr-type G domain. Residues 17-24 (AHIDAGKT), 81-85 (DTPGH), and 135-138 (NKMD) contribute to the GTP site.

This sequence belongs to the TRAFAC class translation factor GTPase superfamily. Classic translation factor GTPase family. EF-G/EF-2 subfamily.

The protein resides in the cytoplasm. In terms of biological role, catalyzes the GTP-dependent ribosomal translocation step during translation elongation. During this step, the ribosome changes from the pre-translocational (PRE) to the post-translocational (POST) state as the newly formed A-site-bound peptidyl-tRNA and P-site-bound deacylated tRNA move to the P and E sites, respectively. Catalyzes the coordinated movement of the two tRNA molecules, the mRNA and conformational changes in the ribosome. The chain is Elongation factor G from Bacillus cereus (strain ZK / E33L).